The chain runs to 212 residues: ATP-dependent Clp protease proteolytic subunit (212 aa).

Serine 113 acts as the Nucleophile in catalysis. The active site involves histidine 138.

This sequence belongs to the peptidase S14 family. As to quaternary structure, fourteen ClpP subunits assemble into 2 heptameric rings which stack back to back to give a disk-like structure with a central cavity, resembling the structure of eukaryotic proteasomes.

It is found in the cytoplasm. The catalysed reaction is Hydrolysis of proteins to small peptides in the presence of ATP and magnesium. alpha-casein is the usual test substrate. In the absence of ATP, only oligopeptides shorter than five residues are hydrolyzed (such as succinyl-Leu-Tyr-|-NHMec, and Leu-Tyr-Leu-|-Tyr-Trp, in which cleavage of the -Tyr-|-Leu- and -Tyr-|-Trp bonds also occurs).. Its function is as follows. Cleaves peptides in various proteins in a process that requires ATP hydrolysis. Has a chymotrypsin-like activity. Plays a major role in the degradation of misfolded proteins. In Saccharophagus degradans (strain 2-40 / ATCC 43961 / DSM 17024), this protein is ATP-dependent Clp protease proteolytic subunit.